Consider the following 61-residue polypeptide: UPF0434 protein Sama_1339 (61 aa).

Belongs to the UPF0434 family.

The chain is UPF0434 protein Sama_1339 from Shewanella amazonensis (strain ATCC BAA-1098 / SB2B).